The primary structure comprises 195 residues: Holliday junction branch migration complex subunit RuvA (195 aa).

Positions 1 to 61 are domain I; it reads MYEYLDGVVV…ENDQTLYGFK (61 aa). A domain II region spans residues 62 to 139; sequence KAEDKELFLN…AVENEVGTLF (78 aa). Residues 139 to 143 are flexible linker; it reads FDLST. A domain III region spans residues 144 to 195; sequence TSNQALDEALEALIALGYSEKEVKKLTKKLSEQTDRTTDQYISSGLKLLMKG.

Belongs to the RuvA family. Homotetramer. Forms an RuvA(8)-RuvB(12)-Holliday junction (HJ) complex. HJ DNA is sandwiched between 2 RuvA tetramers; dsDNA enters through RuvA and exits via RuvB. An RuvB hexamer assembles on each DNA strand where it exits the tetramer. Each RuvB hexamer is contacted by two RuvA subunits (via domain III) on 2 adjacent RuvB subunits; this complex drives branch migration. In the full resolvosome a probable DNA-RuvA(4)-RuvB(12)-RuvC(2) complex forms which resolves the HJ.

It is found in the cytoplasm. Its function is as follows. The RuvA-RuvB-RuvC complex processes Holliday junction (HJ) DNA during genetic recombination and DNA repair, while the RuvA-RuvB complex plays an important role in the rescue of blocked DNA replication forks via replication fork reversal (RFR). RuvA specifically binds to HJ cruciform DNA, conferring on it an open structure. The RuvB hexamer acts as an ATP-dependent pump, pulling dsDNA into and through the RuvAB complex. HJ branch migration allows RuvC to scan DNA until it finds its consensus sequence, where it cleaves and resolves the cruciform DNA. This chain is Holliday junction branch migration complex subunit RuvA, found in Pediococcus pentosaceus (strain ATCC 25745 / CCUG 21536 / LMG 10740 / 183-1w).